A 389-amino-acid polypeptide reads, in one-letter code: N-terminal EF-hand calcium-binding protein 2 (389 aa).

Residue Arg10 is modified to Omega-N-methylarginine. Position 42 is an asymmetric dimethylarginine (Arg42). EF-hand domains are found at residues 63 to 98 (GGTA…GVLN) and 99 to 132 (EKEL…HMGD). The Ca(2+) site is built by Asp76, Asn78, Asp80, Lys82, Glu87, Asp110, Asp112, Thr114, His116, and Glu121. Residues 173 to 198 (LKETANQIQSLLSSVESAVEAIEEQT) are a coiled coil. The ABM domain occupies 289–377 (QLVRQEMAVC…LSQPEALSQI (89 aa)).

In terms of assembly, interacts (calcium-dependent) with ADORA2A and GRM5. As to expression, expressed in the iris, in the ciliary margin of the retina and in the inner portion of the neural retina. Expressed in the spinal dorsal horn with especially strong expression in lamina IIi; found in excitory synaptic boutons (at protein level).

It is found in the cytoplasm. Its subcellular location is the cell projection. The protein localises to the dendrite. It localises to the axon. The protein resides in the cell membrane. May act as a signaling scaffold protein that senses intracellular calcium. Can modulate ligand-induced internalization of ADORA2A and coupling efficiency of mGluR5/GRM5; for both receptors may regulate signaling activity such as promoting MAPK1/3 (ERK1/2) activation. This chain is N-terminal EF-hand calcium-binding protein 2 (Necab2), found in Mus musculus (Mouse).